A 462-amino-acid polypeptide reads, in one-letter code: Glutamate--tRNA ligase 2 (462 aa).

The short motif at 8–18 (PSPTGLLHVGG) is the 'HIGH' region element. Positions 227 to 231 (PLSKR) match the 'KMSKS' region motif. Lys230 is an ATP binding site.

The protein belongs to the class-I aminoacyl-tRNA synthetase family. Glutamate--tRNA ligase type 1 subfamily. In terms of assembly, monomer.

It localises to the cytoplasm. It carries out the reaction tRNA(Glu) + L-glutamate + ATP = L-glutamyl-tRNA(Glu) + AMP + diphosphate. Catalyzes the attachment of glutamate to tRNA(Glu) in a two-step reaction: glutamate is first activated by ATP to form Glu-AMP and then transferred to the acceptor end of tRNA(Glu). The chain is Glutamate--tRNA ligase 2 from Thermosipho melanesiensis (strain DSM 12029 / CIP 104789 / BI429).